Here is a 176-residue protein sequence, read N- to C-terminus: Lipoprotein signal peptidase (176 aa).

3 consecutive transmembrane segments (helical) span residues W12–T32, W67–L87, and V94–D114. Catalysis depends on residues D123 and D141. Residues H133–L153 traverse the membrane as a helical segment.

Belongs to the peptidase A8 family.

The protein resides in the cell inner membrane. The enzyme catalyses Release of signal peptides from bacterial membrane prolipoproteins. Hydrolyzes -Xaa-Yaa-Zaa-|-(S,diacylglyceryl)Cys-, in which Xaa is hydrophobic (preferably Leu), and Yaa (Ala or Ser) and Zaa (Gly or Ala) have small, neutral side chains.. It participates in protein modification; lipoprotein biosynthesis (signal peptide cleavage). This protein specifically catalyzes the removal of signal peptides from prolipoproteins. The sequence is that of Lipoprotein signal peptidase from Shewanella sediminis (strain HAW-EB3).